A 293-amino-acid polypeptide reads, in one-letter code: Transcription initiation factor IIB 2 (293 aa).

The TFIIB-type zinc-finger motif lies at 1–31 (MKCPYCKTDNAITYDVEKGMYVCTNCASVIE). The Zn(2+) site is built by Cys3, Cys6, Cys23, and Cys26. 2 consecutive repeat copies span residues 107 to 193 (SILN…ANSI) and 204 to 285 (EYIP…DIVD).

This sequence belongs to the TFIIB family.

Stabilizes TBP binding to an archaeal box-A promoter. Also responsible for recruiting RNA polymerase II to the pre-initiation complex (DNA-TBP-TFIIB). The polypeptide is Transcription initiation factor IIB 2 (Saccharolobus solfataricus (strain ATCC 35092 / DSM 1617 / JCM 11322 / P2) (Sulfolobus solfataricus)).